Consider the following 238-residue polypeptide: Pyridoxine 5'-phosphate synthase (238 aa).

Asn-6 serves as a coordination point for 3-amino-2-oxopropyl phosphate. Position 8-9 (8-9) interacts with 1-deoxy-D-xylulose 5-phosphate; that stretch reads DH. Arg-17 is a 3-amino-2-oxopropyl phosphate binding site. His-42 functions as the Proton acceptor in the catalytic mechanism. The 1-deoxy-D-xylulose 5-phosphate site is built by Arg-44 and His-49. Catalysis depends on Glu-69, which acts as the Proton acceptor. Thr-99 is a binding site for 1-deoxy-D-xylulose 5-phosphate. His-190 (proton donor) is an active-site residue. 3-amino-2-oxopropyl phosphate is bound by residues Gly-191 and 212–213; that span reads GH.

This sequence belongs to the PNP synthase family. In terms of assembly, homooctamer; tetramer of dimers.

It localises to the cytoplasm. It carries out the reaction 3-amino-2-oxopropyl phosphate + 1-deoxy-D-xylulose 5-phosphate = pyridoxine 5'-phosphate + phosphate + 2 H2O + H(+). The protein operates within cofactor biosynthesis; pyridoxine 5'-phosphate biosynthesis; pyridoxine 5'-phosphate from D-erythrose 4-phosphate: step 5/5. Catalyzes the complicated ring closure reaction between the two acyclic compounds 1-deoxy-D-xylulose-5-phosphate (DXP) and 3-amino-2-oxopropyl phosphate (1-amino-acetone-3-phosphate or AAP) to form pyridoxine 5'-phosphate (PNP) and inorganic phosphate. The protein is Pyridoxine 5'-phosphate synthase of Chlorobium phaeobacteroides (strain BS1).